The following is a 275-amino-acid chain: Formamidopyrimidine-DNA glycosylase (275 aa).

Pro2 functions as the Schiff-base intermediate with DNA in the catalytic mechanism. Catalysis depends on Glu3, which acts as the Proton donor. Catalysis depends on Lys58, which acts as the Proton donor; for beta-elimination activity. DNA contacts are provided by His93, Arg111, and Arg156. The FPG-type zinc finger occupies 241 to 275; it reads FVYDRAGQPCRVCGTPIRQIVQGQRSTYYCPTCQR. The active-site Proton donor; for delta-elimination activity is Arg265.

This sequence belongs to the FPG family. Monomer. Zn(2+) serves as cofactor.

The catalysed reaction is Hydrolysis of DNA containing ring-opened 7-methylguanine residues, releasing 2,6-diamino-4-hydroxy-5-(N-methyl)formamidopyrimidine.. The enzyme catalyses 2'-deoxyribonucleotide-(2'-deoxyribose 5'-phosphate)-2'-deoxyribonucleotide-DNA = a 3'-end 2'-deoxyribonucleotide-(2,3-dehydro-2,3-deoxyribose 5'-phosphate)-DNA + a 5'-end 5'-phospho-2'-deoxyribonucleoside-DNA + H(+). Involved in base excision repair of DNA damaged by oxidation or by mutagenic agents. Acts as a DNA glycosylase that recognizes and removes damaged bases. Has a preference for oxidized purines, such as 7,8-dihydro-8-oxoguanine (8-oxoG). Has AP (apurinic/apyrimidinic) lyase activity and introduces nicks in the DNA strand. Cleaves the DNA backbone by beta-delta elimination to generate a single-strand break at the site of the removed base with both 3'- and 5'-phosphates. The chain is Formamidopyrimidine-DNA glycosylase from Burkholderia cenocepacia (strain ATCC BAA-245 / DSM 16553 / LMG 16656 / NCTC 13227 / J2315 / CF5610) (Burkholderia cepacia (strain J2315)).